The sequence spans 410 residues: Caspase-1 (410 aa).

The CARD domain maps to 1-91 (MADKVLKGKR…HLAETLGLSS (91 aa)). A propeptide spanning residues 1–119 (MADKVLKGKR…PLPASVNNMP (119 aa)) is cleaved from the precursor. The segment covering 88-104 (GLSSSPQSGNSQNTTDS) has biased composition (polar residues). A disordered region spans residues 88–125 (GLSSSPQSGNSQNTTDSEVAFPPLPASVNNMPGPAEPE). Active-site residues include His-235 and Cys-284. A propeptide spanning residues 297–322 (SPAAPMDSTSQMGSSLSQVGDNLEDD) is cleaved from the precursor.

It belongs to the peptidase C14A family. As to quaternary structure, heterotetramer that consists of two anti-parallel arranged heterodimers, each one formed by a 20 kDa (Caspase-1 subunit p20) and a 10 kDa (Caspase-1 subunit p10) subunit. May be a component of the inflammasome, a protein complex which also includes PYCARD, CARD8 and NLRP2 and whose function would be the activation of pro-inflammatory caspases. Component of the AIM2 PANoptosome complex, a multiprotein complex that drives inflammatory cell death (PANoptosis). Both the p10 and p20 subunits interact with MEFV. Interacts with CARD17P/INCA and CARD18. Interacts with SERPINB1; this interaction regulates CASP1 activity. Heterotetramer that consists of two anti-parallel arranged heterodimers, each one formed by a 20 kDa (Caspase-1 subunit p20) and a 10 kDa (Caspase-1 subunit p10) subunit. The two subunits are derived from the precursor sequence by an autocatalytic mechanism. Post-translationally, ubiquitinated via 'Lys-11'-linked polyubiquitination. Deubiquitinated by USP8.

The protein localises to the cytoplasm. It localises to the cell membrane. It catalyses the reaction Strict requirement for an Asp residue at position P1 and has a preferred cleavage sequence of Tyr-Val-Ala-Asp-|-.. In terms of biological role, thiol protease involved in a variety of inflammatory processes by proteolytically cleaving other proteins, such as the precursors of the inflammatory cytokines interleukin-1 beta (IL1B) and interleukin 18 (IL18) as well as the pyroptosis inducer Gasdermin-D (GSDMD), into active mature peptides. Plays a key role in cell immunity as an inflammatory response initiator: once activated through formation of an inflammasome complex, it initiates a pro-inflammatory response through the cleavage of the two inflammatory cytokines IL1B and IL18, releasing the mature cytokines which are involved in a variety of inflammatory processes. Cleaves a tetrapeptide after an Asp residue at position P1. Also initiates pyroptosis, a programmed lytic cell death pathway, through cleavage of GSDMD. In contrast to cleavage of interleukin IL1B, recognition and cleavage of GSDMD is not strictly dependent on the consensus cleavage site but depends on an exosite interface on CASP1 that recognizes and binds the Gasdermin-D, C-terminal (GSDMD-CT) part. Cleaves and activates CASP7 in response to bacterial infection, promoting plasma membrane repair. Upon inflammasome activation, during DNA virus infection but not RNA virus challenge, controls antiviral immunity through the cleavage of CGAS, rendering it inactive. In apoptotic cells, cleaves SPHK2 which is released from cells and remains enzymatically active extracellularly. The polypeptide is Caspase-1 (CASP1) (Felis catus (Cat)).